A 184-amino-acid polypeptide reads, in one-letter code: Ribosome maturation factor RimM (184 aa).

Positions 101 to 180 (EGEFFYCDLV…KITTHNAKTL (80 aa)) constitute a PRC barrel domain.

This sequence belongs to the RimM family. In terms of assembly, binds ribosomal protein uS19.

Its subcellular location is the cytoplasm. An accessory protein needed during the final step in the assembly of 30S ribosomal subunit, possibly for assembly of the head region. Essential for efficient processing of 16S rRNA. May be needed both before and after RbfA during the maturation of 16S rRNA. It has affinity for free ribosomal 30S subunits but not for 70S ribosomes. The polypeptide is Ribosome maturation factor RimM (Helicobacter pylori (strain ATCC 700392 / 26695) (Campylobacter pylori)).